Here is an 800-residue protein sequence, read N- to C-terminus: Kolavenyl diphosphate synthase TPS5, chloroplastic (800 aa).

The transit peptide at 1–75 directs the protein to the chloroplast; the sequence is MSLAYSQATS…VILTAEKSVD (75 aa). Lys244 serves as a coordination point for substrate. Mg(2+) contacts are provided by Asp375 and Asp377. The DXDD motif signature appears at 375–378; it reads DVDD. Lys461 is a substrate binding site.

This sequence belongs to the terpene synthase family. It depends on Mg(2+) as a cofactor. Mostly expressed in trichomes of leaves and fruits.

Its subcellular location is the plastid. The protein resides in the chloroplast. It carries out the reaction (2E,6E,10E)-geranylgeranyl diphosphate = (+)-kolavenyl diphosphate. The protein operates within secondary metabolite biosynthesis; terpenoid biosynthesis. In terms of biological role, involved in the biosynthesis of labdane-type diterpenoid including cleroda-dienols, and peregrinol lactones and furan derivatives, dopaminergic diterpenoids that can bind to dopamine receptors in the human pituitary gland, have probably ability to lower prolactin levels, and are used to treat menstrual cycle disorders (e.g. premenstrual syndrome and mastodynia). Terpene synthase that produces kolavenyl diphosphate from geranylgeranyl diphosphate (GGPP). In Vitex agnus-castus (Chaste tree), this protein is Kolavenyl diphosphate synthase TPS5, chloroplastic.